We begin with the raw amino-acid sequence, 1774 residues long: Collagen alpha-1(XVIII) chain (1774 aa).

A signal peptide spans 1-26; that stretch reads MAPDPSRRLCLLLLLLLSCRLVPASA. Residues 27–785 are nonhelical region 1 (NC1); that stretch reads DGNSLSPLNP…QNPGRGLIKG (759 aa). 2 disordered regions span residues 47–113 and 218–269; these read DSLE…TPAV and LPPF…LEGK. Polar residues-rich tracts occupy residues 55–87 and 244–256; these read KPQN…TPAS and LSSS…SWGN. Asn354 and Asn361 each carry an N-linked (GlcNAc...) asparagine glycan. The FZ domain occupies 365-482; it reads TSTSRCLPLP…SQEDGYCVFI (118 aa). 5 disulfide bridges follow: Cys370–Cys433, Cys380–Cys426, Cys417–Cys455, Cys444–Cys479, and Cys448–Cys468. In terms of domain architecture, Laminin G-like spans 522-704; the sequence is GPDSNSGQVA…EDRASGDFGS (183 aa). Asn585 is a glycosylation site (N-linked (GlcNAc...) asparagine). The segment at 681-1458 is disordered; that stretch reads RVSPVHCLDE…PPGPPGAMGA (778 aa). Basic and acidic residues predominate over residues 708–717; that stretch reads ESSKSHKEDT. Thr730 is subject to Phosphothreonine. Residues 786 to 812 form a triple-helical region 1 (COL1) region; sequence GMKGQKGEPGAQGPPGPAGPQGPAGPV. Residues 809–824 are compositionally biased toward low complexity; sequence AGPVVQSPNSQPVPGA. Residues 813 to 822 form a nonhelical region 2 (NC2) region; the sequence is VQSPNSQPVP. Residues 823–878 enclose the Collagen-like 1 domain; it reads GAQGPPGPQGPPGKDGTPGRDGEPGDPGEDGRPGDTGPQGFPGTPGDVGPKGEKGD. Residues 823 to 896 form a triple-helical region 2 (COL2) region; sequence GAQGPPGPQG…PGPPGPPGPS (74 aa). Residues 839-855 show a composition bias toward basic and acidic residues; it reads TPGRDGEPGDPGEDGRP. Pro residues predominate over residues 884-895; it reads RGPPGPPGPPGP. Residues 897–920 are nonhelical region 3 (NC3); that stretch reads FRQDKLTFIDMEGSGFSGDIESLR. An O-linked (Xyl...) (chondroitin sulfate) serine glycan is attached at Ser910. The tract at residues 921–1042 is triple-helical region 3 (COL3); that stretch reads GPRGFPGPPG…PGPPGPPGPG (122 aa). Residues 925-935 show a composition bias toward pro residues; it reads FPGPPGPPGVP. An N-linked (GlcNAc...) asparagine glycan is attached at Asn947. The span at 951–963 shows a compositional bias: low complexity; the sequence is APGPAGLPGVPGK. Collagen-like domains are found at residues 953–1007 and 1008–1041; these read GPAG…GSKG and DLGP…PPGP. 2 stretches are compositionally biased toward pro residues: residues 967 to 982 and 1026 to 1041; these read PGFP…PGKE and PVGP…PPGP. Residues 1043 to 1065 are nonhelical region 4 (NC4); the sequence is FAAGFDDMEGSGIPLWTTARSSD. 4 consecutive Collagen-like domains span residues 1066–1117, 1118–1147, 1162–1202, and 1216–1264; these read GLQG…GPKG, EKGM…PPGP, PGPE…GEPG, and QKGA…EPGD. Positions 1066–1148 are triple-helical region 4 (COL4); it reads GLQGPPGSPG…PGPPGPPGPV (83 aa). Positions 1138–1147 are enriched in pro residues; sequence LPGPPGPPGP. Residues 1149 to 1162 form a nonhelical region 5 (NC5) region; it reads IYVSSEDKAIVSTP. Residues 1163–1204 form a triple-helical region 5 (COL5) region; that stretch reads GPEGKPGYAGFPGPAGPKGDLGSKGEQGLPGPKGEKGEPGTI. Positions 1205–1217 are nonhelical region 6 (NC6); the sequence is FSPDGRALGHPQK. The triple-helical region 6 (COL6) stretch occupies residues 1218–1290; the sequence is GAKGEPGFRG…PGPPGPPGMP (73 aa). Residues 1275–1289 show a composition bias toward pro residues; that stretch reads PGPPGPPGPPGPPGM. The interval 1291-1300 is nonhelical region 7 (NC7); sequence IYDSNAFVES. A compositionally biased stretch (low complexity) spans 1301–1317; sequence GRPGLPGQQGVQGPSGP. Residues 1301 to 1333 are triple-helical region 7 (COL7); sequence GRPGLPGQQGVQGPSGPKGDKGEVGPPGPPGQF. A nonhelical region 8 (NC8) region spans residues 1334–1345; that stretch reads PIDLFHLEAEMK. Positions 1338–1362 are enriched in basic and acidic residues; that stretch reads FHLEAEMKGDKGDRGDAGQKGERGE. The triple-helical region 8 (COL8) stretch occupies residues 1346-1369; sequence GDKGDRGDAGQKGERGEPGAPGGG. The Cell attachment site motif lies at 1351-1353; that stretch reads RGD. The segment at 1370–1376 is nonhelical region 9 (NC9); sequence FFSSSVP. Composition is skewed to pro residues over residues 1376–1388, 1398–1407, 1418–1431, and 1441–1453; these read PGPP…PGIP, PPGPPGPQGP, PPGP…PSFP, and PGPP…PGPP. A triple-helical region 9 (COL9) region spans residues 1377-1428; it reads GPPGPPGYPGIPGPKGESIRGPPGPPGPQGPPGIGYEGRQGPPGPPGPPGPP. The segment at 1429–1441 is nonhelical region 10 (NC10); sequence SFPGPHRQTVSVP. The interval 1442 to 1459 is triple-helical region 10 (COL10); it reads GPPGPPGPPGPPGAMGAS. Residues 1460–1774 form a nonhelical region 11 (NC11) region; the sequence is AGQVRIWATY…ENSFMTSFSK (315 aa). The segment at 1474–1519 is non-collagenous domain 1 association domain; it reads DKIREVPEGWLIFVAEREELYVRVRNGFRKVLLEARTALPRGTGNE. Positions 1520 to 1590 are non-collagenous domain 1 hinge region; sequence VAALQPPLVQ…PPARPTLSLA (71 aa). Residues His1591, His1593, Asp1595, His1601, and Asp1666 each coordinate Zn(2+). 2 disulfides stabilise this stretch: Cys1623–Cys1763 and Cys1725–Cys1755.

It belongs to the multiplexin collagen family. Forms homotrimers. Recombinant non-collagenous domain 1 has stronger affinity to NID1, HSPG2 and laminin-1:NID1 complex and lower affinity to FBLN1 and FBLN2 than endostatin. In terms of assembly, monomeric. Interacts with KDR/VEGFR2. Interacts with the ITGA5:ITGB1 complex. Interacts with NID1, HSPG2, laminin-1:NID1 complex, FBLN1 and FBLN2. In terms of processing, prolines at the third position of the tripeptide repeating unit (G-X-Y) of the triple-helical regions are hydroxylated. Post-translationally, undergoes proteolytic processing by CTSL/cathepsin-L and elastase-like proteases to generate both non-collagenous domain 1 trimers and endostatin monomers. In tissue extracts (brain, skeletal muscle, heart, kidney, testis and liver) predominantly bands of approximately 38 kDa are detected; recombinant non-collagenous domain 1 shows similar mobility. In vitro, several proteolytic cleavage sites in the non-collagenous domain 1 hinge region generating different endostatin-like peptides are reported. In terms of tissue distribution, expressed in liver, kidney, lung, skeletal muscle and testis.

Its subcellular location is the secreted. The protein localises to the extracellular space. The protein resides in the extracellular matrix. It is found in the basement membrane. Its function is as follows. Probably plays a major role in determining the retinal structure as well as in the closure of the neural tube. Functionally, may regulate extracellular matrix-dependent motility and morphogenesis of endothelial and non-endothelial cells; the function requires homotrimerization and implicates MAPK signaling. In terms of biological role, potently inhibits endothelial cell proliferation and angiogenesis. May inhibit angiogenesis by binding to the heparan sulfate proteoglycans involved in growth factor signaling. Inhibits VEGFA isoform VEGF165-induced endothelial cell proliferation and migration. Seems to inhibit VEGFA-mediated signaling by blocking the interaction of VEGFA to its receptor KDR/VEGFR2. Modulates endothelial cell migration in an integrin-dependent manner implicating integrin ITGA5:ITGB1 and to a lesser extent ITGAV:ITGB3 and ITGAV:ITGB5. May negatively regulate the activity of homotrimeric non-collagenous domain 1. The protein is Collagen alpha-1(XVIII) chain of Mus musculus (Mouse).